Here is a 171-residue protein sequence, read N- to C-terminus: MAIETAIFAGGCFWCMVQPFDSLDGIEKVRSGYTGGHVENPTYEQVLTHTTGHTEAVKIWFDSEKISYRELVEIYWEQTDPTDAMGQFQDRGDNYRPVIFVNSPEQREIAEESRAALAASNRFDEPIVTKIEDAKPFYEAEEYHQDFYKKDPEREALEMAQRLQFKADKWN.

The active site involves Cys12.

Belongs to the MsrA Met sulfoxide reductase family.

It carries out the reaction L-methionyl-[protein] + [thioredoxin]-disulfide + H2O = L-methionyl-(S)-S-oxide-[protein] + [thioredoxin]-dithiol. The catalysed reaction is [thioredoxin]-disulfide + L-methionine + H2O = L-methionine (S)-S-oxide + [thioredoxin]-dithiol. In terms of biological role, has an important function as a repair enzyme for proteins that have been inactivated by oxidation. Catalyzes the reversible oxidation-reduction of methionine sulfoxide in proteins to methionine. The chain is Peptide methionine sulfoxide reductase MsrA from Leuconostoc mesenteroides subsp. mesenteroides (strain ATCC 8293 / DSM 20343 / BCRC 11652 / CCM 1803 / JCM 6124 / NCDO 523 / NBRC 100496 / NCIMB 8023 / NCTC 12954 / NRRL B-1118 / 37Y).